A 1615-amino-acid polypeptide reads, in one-letter code: Ras-responsive element-binding protein 1 (1615 aa).

The disordered stretch occupies residues 1 to 44 (MMSAVMNVGKIAENGGTSQTVKSPSKSPAPNRIGRRNQETKEEK). Polar residues predominate over residues 15–28 (GGTSQTVKSPSKSP). 3 C2H2-type zinc fingers span residues 47 to 69 (YTCP…IRQH), 78 to 100 (HSCS…MLVH), and 106 to 128 (YKCS…MKIH). A disordered region spans residues 127-169 (IHEKDPNSTASTTPPSPLKAKRLSSKRKFSQDAEMDREERTPA). Positions 145-154 (KAKRLSSKRK) are enriched in basic residues. 3 C2H2-type zinc fingers span residues 189–211 (YHCP…METH), 216–239 (LRCD…AVIH), and 297–319 (FICE…TETH). A disordered region spans residues 511-556 (SAQQASPGCISPSLPPPPLRLIKNSVETSSNSHLSQPGAKSSPSSQ). The segment covering 535–549 (SVETSSNSHLSQPGA) has biased composition (polar residues). 4 C2H2-type zinc fingers span residues 622 to 644 (YPCR…IRSH), 650 to 672 (YQCN…LRTH), 732 to 754 (TVCK…MRTH), and 763 to 788 (FECK…QHLH). Disordered regions lie at residues 1025 to 1044 (AADA…KSGN), 1058 to 1104 (DSNL…VDLE), and 1123 to 1162 (KFSP…KRNT). Residues 1026–1036 (ADASPKAASSS) are compositionally biased toward low complexity. Basic residues predominate over residues 1082–1095 (TKKRGRKKGTKNKP). A compositionally biased stretch (polar residues) spans 1123-1132 (KFSPFLQSTD). The segment at 1170–1192 (ITCPYCPRVFSWASSLQRHMLTH) adopts a C2H2-type 11 zinc-finger fold. 2 disordered regions span residues 1214–1269 (CEKE…KSLD) and 1313–1418 (LSRH…DKRK). The span at 1242-1262 (PAEEDAEEKADEYEEGPEEDS) shows a compositional bias: acidic residues. A C2H2-type 12 zinc finger spans residues 1298–1320 (HACDVCGKTFKFAGALSRHKKAH). Composition is skewed to basic and acidic residues over residues 1321–1339 (IRED…KSIQ) and 1388–1414 (GTER…TAKA). C2H2-type zinc fingers lie at residues 1419 to 1441 (KVCT…MRSH) and 1447 to 1469 (YKCQ…QRIH). Positions 1464–1477 (RHQRIHQKVKNTRN) are enriched in basic residues. Residues 1464-1585 (RHQRIHQKVK…SELERPSGFI (122 aa)) form a disordered region. 2 stretches are compositionally biased toward basic and acidic residues: residues 1478 to 1493 (HGKE…RCGE) and 1566 to 1580 (PAKD…ELER).

It belongs to the krueppel C2H2-type zinc-finger protein family. In terms of tissue distribution, broadly expressed, except in brain.

It localises to the nucleus. Functionally, transcription factor that binds specifically to the RAS-responsive elements (RRE) of gene promoters. The sequence is that of Ras-responsive element-binding protein 1 (RREB1) from Gallus gallus (Chicken).